We begin with the raw amino-acid sequence, 237 residues long: Uridylate kinase (237 aa).

11-14 contributes to the ATP binding site; that stretch reads KLSG. Gly52 is a binding site for UMP. Residues Gly53 and Arg57 each contribute to the ATP site. Residues Asp72 and 134–141 each bind UMP; that span reads TGYSYFTT. Asn162, Tyr168, and Asp171 together coordinate ATP.

This sequence belongs to the UMP kinase family. In terms of assembly, homohexamer.

The protein resides in the cytoplasm. The catalysed reaction is UMP + ATP = UDP + ADP. It functions in the pathway pyrimidine metabolism; CTP biosynthesis via de novo pathway; UDP from UMP (UMPK route): step 1/1. Its activity is regulated as follows. Inhibited by UTP. Its function is as follows. Catalyzes the reversible phosphorylation of UMP to UDP. This is Uridylate kinase from Mycoplasma capricolum subsp. capricolum (strain California kid / ATCC 27343 / NCTC 10154).